Consider the following 163-residue polypeptide: MDWILPIAGIIAAIAFLILCIGIVVVLISVKKNLDYVAKTLDGVEGQVQGITRETTDLLHKVNRLTEDIQGKVDRLNSVVDAVKGIGDSVQNLNGSVDRVTNSITHNISQNEDKISQVVQWSNVAMEIADKWQNRYNRRGSANYKTNTVADDANHSYNSRVNK.

The chain crosses the membrane as a helical span at residues 7-27 (IAGIIAAIAFLILCIGIVVVL).

It belongs to the UPF0478 family.

It localises to the cell membrane. This Staphylococcus epidermidis (strain ATCC 35984 / DSM 28319 / BCRC 17069 / CCUG 31568 / BM 3577 / RP62A) protein is UPF0478 protein SERP1299.